The following is a 290-amino-acid chain: Porphobilinogen deaminase (290 aa).

C237 bears the S-(dipyrrolylmethanemethyl)cysteine mark.

Belongs to the HMBS family. Monomer. Requires dipyrromethane as cofactor.

It catalyses the reaction 4 porphobilinogen + H2O = hydroxymethylbilane + 4 NH4(+). The protein operates within porphyrin-containing compound metabolism; protoporphyrin-IX biosynthesis; coproporphyrinogen-III from 5-aminolevulinate: step 2/4. Tetrapolymerization of the monopyrrole PBG into the hydroxymethylbilane pre-uroporphyrinogen in several discrete steps. The protein is Porphobilinogen deaminase of Clostridium botulinum (strain Langeland / NCTC 10281 / Type F).